The primary structure comprises 938 residues: Kexin (938 aa).

The first 20 residues, 1–20, serve as a signal peptide directing secretion; that stretch reads MLPIKLLIFILGYLLSPTLQ. N-linked (GlcNAc...) asparagine glycosylation is found at N41 and N193. Residues 179–489 enclose the Peptidase S8 domain; that stretch reads QWHLINLKYP…YGKTDAYKMV (311 aa). Residues D213 and H251 each act as charge relay system in the active site. 2 disulfides stabilise this stretch: C267/C414 and C359/C389. Catalysis depends on S422, which acts as the Charge relay system. 4 N-linked (GlcNAc...) asparagine glycosylation sites follow: N441, N512, N539, and N599. The P/Homo B domain maps to 498–647; the sequence is VKPQAWYYSD…QFRIFGESID (150 aa). The interval 671 to 768 is disordered; the sequence is EKQNSKSTTT…DNDNDNGNKK (98 aa). Residues 677-691 are compositionally biased toward low complexity; sequence STTTTSSTTTATTTS. Polar residues predominate over residues 711–735; it reads KVDNSASITTSQTASLTSSNEQHQP. Positions 740–762 are enriched in acidic residues; the sequence is SDSDSDTDDENKQEGEEDNDNDN. The chain crosses the membrane as a helical span at residues 775–795; it reads GFYLMSIAVVGFIAVLLVMKF. Topologically, residues 796–924 are cytoplasmic; the sequence is HKTPGSGRRR…SGTSTKKYKD (129 aa). Positions 798–808 are enriched in basic residues; that stretch reads TPGSGRRRRRR. A disordered region spans residues 798–938; the sequence is TPGSGRRRRR…EDHKDVVGTQ (141 aa). The span at 820–831 shows a compositional bias: acidic residues; sequence DYSDSDDDEDDF. The segment covering 832–849 has biased composition (basic and acidic residues); it reads DTRRADDDSFDLGHRNDQ. A compositionally biased stretch (low complexity) spans 850–859; sequence RVVSASQQQR. The segment covering 860 to 874 has biased composition (basic and acidic residues); sequence QYDRQQDETRDRLFD. Over residues 902–919 the composition is skewed to polar residues; it reads QQSAKAPSNSEGNSGTST. A compositionally biased stretch (basic and acidic residues) spans 921–938; sequence KYKDNEADEDHKDVVGTQ.

It belongs to the peptidase S8 family. Furin subfamily. Requires Ca(2+) as cofactor. O-glycosylated.

The protein resides in the golgi apparatus. The protein localises to the trans-Golgi network membrane. It catalyses the reaction Cleavage of -Lys-Arg-|-Xaa- and -Arg-Arg-|-Xaa- bonds to process yeast alpha-factor pheromone and killer toxin precursors.. This is Kexin (KEX2) from Candida albicans (strain WO-1) (Yeast).